Consider the following 296-residue polypeptide: Cell division protein DivIB (296 aa).

Topologically, residues M1–R25 are cytoplasmic. A helical membrane pass occupies residues L26–F46. The Extracellular segment spans residues T47–S296. The region spanning S50–Y118 is the POTRA domain.

This sequence belongs to the FtsQ/DivIB family. DivIB subfamily.

The protein localises to the cell membrane. Cell division protein that may be involved in stabilizing or promoting the assembly of the division complex. The protein is Cell division protein DivIB of Macrococcus caseolyticus (strain JCSC5402) (Macrococcoides caseolyticum).